A 304-amino-acid polypeptide reads, in one-letter code: MVKNQYISQNMENKEIENKEIENKKTDSKEFDKEIVSCLIKIVETIDSIKPIDPEILNKKDLDLFDLMMPLAESCGMGWYYKQLQTECKSNKEIKLQNKQQENSEEKNSEEKNSEEKNSEEKRMLEILNSNLPTEGKIIIVNATNGKERKAFYTWADYHNLSHQPTRIDLFDDTFIFKCEECGESNYDDDMRYQSDWSTINPGACYGSFIKCPNYCDTFIHTEDYDPYGGIKRMIAFNAIIIGHDIPKLSRKTTKRKHNKQGLSSNDLSVFNDTPVRDFIVMDLNDFHSKFKSKDNGYVKINDE.

2 coiled-coil regions span residues 3–35 (KNQYISQNMENKEIENKEIENKKTDSKEFDKEI) and 89–132 (KSNK…NSNL). The interval 96-121 (LQNKQQENSEEKNSEEKNSEEKNSEE) is disordered.

This is an uncharacterized protein from Acanthamoeba polyphaga (Amoeba).